A 324-amino-acid chain; its full sequence is Adenine deaminase (324 aa).

Residues His-11, His-13, and His-189 each coordinate Zn(2+). The active-site Proton donor is Glu-192. Residue Asp-270 coordinates Zn(2+). Asp-271 is a substrate binding site.

It belongs to the metallo-dependent hydrolases superfamily. Adenosine and AMP deaminases family. Adenine deaminase type 2 subfamily. The cofactor is Zn(2+).

The enzyme catalyses adenine + H2O + H(+) = hypoxanthine + NH4(+). Its function is as follows. Catalyzes the hydrolytic deamination of adenine to hypoxanthine. Plays an important role in the purine salvage pathway and in nitrogen catabolism. The protein is Adenine deaminase of Sinorhizobium medicae (strain WSM419) (Ensifer medicae).